The following is a 395-amino-acid chain: Cystathionine beta-lyase MetC (395 aa).

At Lys210 the chain carries N6-(pyridoxal phosphate)lysine.

This sequence belongs to the trans-sulfuration enzymes family. As to quaternary structure, homotetramer; dimer of dimers. It depends on pyridoxal 5'-phosphate as a cofactor.

It localises to the cytoplasm. The catalysed reaction is L,L-cystathionine + H2O = L-homocysteine + pyruvate + NH4(+). The enzyme catalyses L-cysteine + H2O = hydrogen sulfide + pyruvate + NH4(+) + H(+). It catalyses the reaction an S-substituted L-cysteine + H2O = a thiol + pyruvate + NH4(+). The protein operates within amino-acid biosynthesis; L-methionine biosynthesis via de novo pathway; L-homocysteine from L-cystathionine: step 1/1. With respect to regulation, L-cysteine inhibits cystathionine beta-lyase activity competitively. Inhibited by aminoethoxyvinylglycine (AVG). Its function is as follows. Primarily catalyzes the cleavage of cystathionine to homocysteine, pyruvate and ammonia during methionine biosynthesis. Also exhibits cysteine desulfhydrase activity, producing sulfide from cysteine. In addition, under certain growth conditions, exhibits significant alanine racemase coactivity. In Escherichia coli (strain K12), this protein is Cystathionine beta-lyase MetC.